We begin with the raw amino-acid sequence, 299 residues long: Ectoine dioxygenase (299 aa).

A disordered region spans residues methionine 1–serine 40. Position 133 (glutamine 133) interacts with L-ectoine. Lysine 139 lines the 2-oxoglutarate pocket. Fe cation is bound by residues histidine 150, aspartate 152, and histidine 251.

The protein belongs to the PhyH family. EctD subfamily. Homodimer. Fe(2+) is required as a cofactor.

It carries out the reaction L-ectoine + 2-oxoglutarate + O2 = 5-hydroxyectoine + succinate + CO2. Its function is as follows. Involved in the biosynthesis of 5-hydroxyectoine, called compatible solute, which helps organisms to survive extreme osmotic stress by acting as a highly soluble organic osmolyte. Catalyzes the 2-oxoglutarate-dependent selective hydroxylation of L-ectoine to yield (4S,5S)-5-hydroxyectoine. The sequence is that of Ectoine dioxygenase from Streptomyces coelicolor (strain ATCC BAA-471 / A3(2) / M145).